We begin with the raw amino-acid sequence, 275 residues long: Large ribosomal subunit protein uL2 (275 aa).

The interval 222–275 (GKVMNPVDHPHGGGEGRNPIGRNPSTPWGKLAMGVKTRGNKKSDRLIVKRRNKK) is disordered.

This sequence belongs to the universal ribosomal protein uL2 family. In terms of assembly, part of the 50S ribosomal subunit. Forms a bridge to the 30S subunit in the 70S ribosome.

In terms of biological role, one of the primary rRNA binding proteins. Required for association of the 30S and 50S subunits to form the 70S ribosome, for tRNA binding and peptide bond formation. It has been suggested to have peptidyltransferase activity; this is somewhat controversial. Makes several contacts with the 16S rRNA in the 70S ribosome. In Desulforamulus reducens (strain ATCC BAA-1160 / DSM 100696 / MI-1) (Desulfotomaculum reducens), this protein is Large ribosomal subunit protein uL2.